A 1504-amino-acid chain; its full sequence is DNA-directed RNA polymerase subunit beta' (1504 aa).

Residues cysteine 60, cysteine 62, cysteine 75, and cysteine 78 each contribute to the Zn(2+) site. A disordered region spans residues arginine 265–arginine 294. Residues alanine 279–arginine 294 show a composition bias toward basic and acidic residues. Mg(2+)-binding residues include aspartate 626, aspartate 628, and aspartate 630. The Zn(2+) site is built by cysteine 1002, cysteine 1075, cysteine 1082, and cysteine 1085. The disordered stretch occupies residues arginine 1468–alanine 1504.

This sequence belongs to the RNA polymerase beta' chain family. As to quaternary structure, the RNAP catalytic core consists of 2 alpha, 1 beta, 1 beta' and 1 omega subunit. When a sigma factor is associated with the core the holoenzyme is formed, which can initiate transcription. It depends on Mg(2+) as a cofactor. Zn(2+) is required as a cofactor.

The enzyme catalyses RNA(n) + a ribonucleoside 5'-triphosphate = RNA(n+1) + diphosphate. Functionally, DNA-dependent RNA polymerase catalyzes the transcription of DNA into RNA using the four ribonucleoside triphosphates as substrates. The polypeptide is DNA-directed RNA polymerase subunit beta' (Roseiflexus sp. (strain RS-1)).